Reading from the N-terminus, the 272-residue chain is MIKKAIIPAGGFGTRNLPVTKVIPKEMFPVGSKPVIHYLVEELKESGIEDILMVVSSHKNLIVDYFDSSLALEAFLASKNKLHLLREHPIPDIRIHYVRQPYAKGLGDAISFGKQFAGGEPFAVVLPDDLIFSANQPALGQLIEAYTKYQSSVIGLKETKTEDLHHYGVIKGEPVEKGLYRIQDIVEKPKQNPPSHFAAAGRYIFTPDIFNELEALEADSGGEVQVTDAIKASLGACTVYGKLLEGERYDIGLQKDYLKLIYDMLKTEKNPQ.

Belongs to the UDPGP type 2 family.

It carries out the reaction alpha-D-glucose 1-phosphate + UTP + H(+) = UDP-alpha-D-glucose + diphosphate. This chain is Putative UTP--glucose-1-phosphate uridylyltransferase (ytdA), found in Bacillus subtilis (strain 168).